Here is a 110-residue protein sequence, read N- to C-terminus: MVVLKVCLVLLFLVGGTTSANLRLSKLGLLMKSDHQHSNDDESSKPCCDQCACTKSNPPQCRCSDMRLNSCHSACKSCICALSYPAQCFCVDITDFCYEPCKPSEDDKEN.

The first 19 residues, 1 to 19 (MVVLKVCLVLLFLVGGTTS), serve as a signal peptide directing secretion. Residues 20–39 (ANLRLSKLGLLMKSDHQHSN) constitute a propeptide that is removed on maturation. 7 disulfides stabilise this stretch: Cys-47-Cys-101, Cys-48-Cys-63, Cys-51-Cys-97, Cys-53-Cys-61, Cys-71-Cys-78, Cys-75-Cys-90, and Cys-80-Cys-88.

Belongs to the Bowman-Birk serine protease inhibitor family.

Functionally, inhibitor of trypsin and of chymotrypsin. This is Bowman-Birk type proteinase inhibitor from Glycine max (Soybean).